A 581-amino-acid polypeptide reads, in one-letter code: Transcription activator GAGA (581 aa).

The BTB domain occupies 34 to 99 (VDCTLAAGGR…VYRGEVSVDH (66 aa)). Residues 201-397 (VIQAFLPARK…SSGSGSGALS (197 aa)) are interaction with E(bx). Phosphothreonine is present on threonine 237. Disordered regions lie at residues 298 to 343 (ITPA…EQPA) and 364 to 404 (LRHF…SVPQ). The C2H2-type; degenerate zinc-finger motif lies at 343-366 (ATCPICYAVIRQSRNLRRHLELRH). Residues 381-401 (GKKSSSGSSGSGSGALSSSGS) are compositionally biased toward low complexity.

As to quaternary structure, interacts with Bin1, lolal, corto, ttk and ph-p. Interacts with FACT subunits Ssrp and dre4/SPT16. Interacts with E(bx). Upon ecdysone stimulation, interacts with Nup98. The N-terminus is blocked. As to expression, expressed in the central nervous system throughout development.

The protein localises to the nucleus. It is found in the chromosome. In terms of biological role, transcriptional activator that functions by regulating chromatin structure. Overcomes the repressive effects of chromatin by promoting the open chromatin conformation in promoter gene regions, thereby allowing access to other transcription factors. Binds to DNA Polycomb response elements (PREs) at the bithorax complex and to the proximal region of the engrailed promoter, and positively regulates transcription of many genes including homeotic ones. Involved in zygotic genome activation (ZGA), a critical event in early embryonic development during which the developmental control passes from maternally provided mRNAs to the expression of the zygotic genome after fertilization. Binds to the DNA sequence (GA)n, with optimal binding to the pentamer 5'-GAGAG-3'. Binds DNA as an oligomer. May also act as a transcriptional repressor, maintaining the repressed state of genes including lolal, and down-regulating its own transcription. Required for dosage compensation in males and may be involved in oogenesis. Also has a role in nuclear division. This chain is Transcription activator GAGA (Trl), found in Drosophila melanogaster (Fruit fly).